The chain runs to 387 residues: Phosphoglycerate kinase (387 aa).

Substrate is bound by residues 21-23 (DLN), R36, 59-62 (HLGR), R113, and R146. ATP contacts are provided by residues K197, E314, and 340-343 (GGDT).

The protein belongs to the phosphoglycerate kinase family. Monomer.

Its subcellular location is the cytoplasm. It carries out the reaction (2R)-3-phosphoglycerate + ATP = (2R)-3-phospho-glyceroyl phosphate + ADP. The protein operates within carbohydrate degradation; glycolysis; pyruvate from D-glyceraldehyde 3-phosphate: step 2/5. The sequence is that of Phosphoglycerate kinase from Klebsiella pneumoniae (strain 342).